Here is a 432-residue protein sequence, read N- to C-terminus: Peptidase B (432 aa).

Mn(2+) contacts are provided by lysine 196 and aspartate 201. Lysine 208 is a catalytic residue. Residues aspartate 219, aspartate 278, and glutamate 280 each contribute to the Mn(2+) site. The active site involves arginine 282.

The protein belongs to the peptidase M17 family. In terms of assembly, homohexamer. The cofactor is Mn(2+).

The protein resides in the cytoplasm. It catalyses the reaction Release of an N-terminal amino acid, Xaa, from a peptide or arylamide. Xaa is preferably Glu or Asp but may be other amino acids, including Leu, Met, His, Cys and Gln.. Probably plays an important role in intracellular peptide degradation. This is Peptidase B from Yersinia pseudotuberculosis serotype O:1b (strain IP 31758).